We begin with the raw amino-acid sequence, 506 residues long: MEKFQSYLGLDRSQQHYFLYPLIFQEYIYVLAHDHGLNRSILLENAGYDNKSSLLIVKRLITRMYQQNHLILSVNDSKQTPFLGDNKNFYSQVMSEVSSIIMEIPFSLRLISSLERKGVVKFDNLRSIHSIFSFLEDNFSHLNYVLDILIPYPAHLEILVQALRYWIEDASSLHLLRFFLHEYHNRDSLITSNSKKASSSFSKRNHRLFFFLYTSHVCEYESGFIFLRNQSSHLRSTSSGALLERIYFYGKIEHLAEVFTRAFQANLWLFKDPFMHYVRYQGKSILASKGTFLLMNKWKYYFVNFWKSYFYLWSQPGRIYINQLSNHSLDFLGYRSSVRLKPSMVRSQMLENAFLIDNAIKKFDTIVPIMPLIGSLAKSKFCNALGHPIGKAIWADLSDSDIIDRFGRIYRNLSHYHSGSSKKKSLYRVKYILRLSCARTLARKHKSTVRAFLKRFGSELLEEFFTEEEQVFSLTFPRVSSISRRLSRRPIWYLDIICINDLANHE.

Belongs to the intron maturase 2 family. MatK subfamily.

Its subcellular location is the plastid. The protein localises to the chloroplast. Usually encoded in the trnK tRNA gene intron. Probably assists in splicing its own and other chloroplast group II introns. The chain is Maturase K from Atractylodes lancea (Atractylodes japonica).